A 225-amino-acid polypeptide reads, in one-letter code: Lipoprotein CseA (225 aa).

A signal peptide spans 1 to 36 (MRGLTDGRTPRGTRRTTQAASTAVAVFVALGVSLAG). C37 carries N-palmitoyl cysteine lipidation. C37 carries the S-diacylglycerol cysteine lipid modification. Disordered regions lie at residues 40–77 (GGTG…APDR) and 205–225 (THND…EPDS). Residues 60-73 (SASPAPAAKASPSK) are compositionally biased toward low complexity.

It localises to the cell membrane. In terms of biological role, may be involved in the stabilization of the cell envelope or may interact with the sensor protein CseC to modulate its activity, in response to cell envelope stress. The sequence is that of Lipoprotein CseA (cseA) from Streptomyces coelicolor (strain ATCC BAA-471 / A3(2) / M145).